The sequence spans 245 residues: Probable metal transport system ATP-binding protein CPn_0542/CP_0210/CPj0542/CpB0563 (245 aa).

One can recognise an ABC transporter domain in the interval 5–240; that stretch reads ILAEGLAFRY…CCHPYKNQEF (236 aa). 39 to 46 serves as a coordination point for ATP; sequence GPNGGGKS.

The protein belongs to the ABC transporter superfamily.

The protein resides in the cell inner membrane. Its function is as follows. Part of an ATP-driven transport system CPn0541/CPn0542/CPn0543 for a metal. Probably responsible for energy coupling to the transport system. The protein is Probable metal transport system ATP-binding protein CPn_0542/CP_0210/CPj0542/CpB0563 of Chlamydia pneumoniae (Chlamydophila pneumoniae).